A 129-amino-acid chain; its full sequence is Glycine cleavage system H protein (129 aa).

The 83-residue stretch at 23-105 (SAVVGITEHA…YGEGWLAKFS (83 aa)) folds into the Lipoyl-binding domain. K64 is modified (N6-lipoyllysine).

Belongs to the GcvH family. In terms of assembly, the glycine cleavage system is composed of four proteins: P, T, L and H. Requires (R)-lipoate as cofactor.

The glycine cleavage system catalyzes the degradation of glycine. The H protein shuttles the methylamine group of glycine from the P protein to the T protein. In Herpetosiphon aurantiacus (strain ATCC 23779 / DSM 785 / 114-95), this protein is Glycine cleavage system H protein.